The primary structure comprises 154 residues: Acidic phospholipase A2 2 (154 aa).

Positions 1–19 (MHPAHLLVPLGVCVSLLGA) are cleaved as a signal peptide. Residues 20 to 27 (ARIPPLPL) constitute a propeptide that is removed on maturation. Intrachain disulfides connect Cys38–Cys104, Cys54–Cys153, Cys56–Cys72, Cys71–Cys132, Cys78–Cys125, Cys88–Cys118, and Cys111–Cys123. Ca(2+)-binding residues include Tyr55, Gly57, and Gly59. His75 is an active-site residue. Position 76 (Asp76) interacts with Ca(2+). Asp126 is a catalytic residue.

This sequence belongs to the phospholipase A2 family. Group I subfamily. D49 sub-subfamily. Monomer. Ca(2+) serves as cofactor. In terms of tissue distribution, expressed by the venom gland.

The protein localises to the secreted. The enzyme catalyses a 1,2-diacyl-sn-glycero-3-phosphocholine + H2O = a 1-acyl-sn-glycero-3-phosphocholine + a fatty acid + H(+). Snake venom phospholipase A2 (PLA2) that shows moderate enzymatic activity and exhibits procoagulant activity. PLA2 catalyzes the calcium-dependent hydrolysis of the 2-acyl groups in 3-sn-phosphoglycerides. The protein is Acidic phospholipase A2 2 of Pseudonaja textilis (Eastern brown snake).